The chain runs to 90 residues: UPF0298 protein BLi01717/BL02989 (90 aa).

This sequence belongs to the UPF0298 family.

It localises to the cytoplasm. In Bacillus licheniformis (strain ATCC 14580 / DSM 13 / JCM 2505 / CCUG 7422 / NBRC 12200 / NCIMB 9375 / NCTC 10341 / NRRL NRS-1264 / Gibson 46), this protein is UPF0298 protein BLi01717/BL02989.